A 704-amino-acid chain; its full sequence is MYCWGSGRIGHGSPLSDIKTPKPLYFNISNSEQVNIFSEEEETEVKGEKDIEFIDFCAGRAHSLAIDNKNRCWVFGENSSAEFGNNSLVYSKVPILNKQFENEKIVSVSCWNQSYAITDQGKVWEWGKSIDTLIPRLLKFQYPIKAIDCSLNNSIGVSHNGIAFIGFNFNNEPKPVDYFIENNIEIQSVACGVNHYLYLTNRGEVYSNGGGISTGHYDEFYNNNNNNNNNNNNNNNNNNNNNNNNNNEIKEKVVEKVVEEEEGEEQFNIIIPKKLKQLRNIIEISSGYYNSLALDGYQNQVYGWGENLNGQLGIEGIDYSTEPILIELPLVEIKHISSGAYHSAFVTNNGELIVMGGGLVVSDDIRMSVALGNGEGGFQTIQFKVDTTKDETIISENIKFNKPTSQLINFEIKDKNENNETKHTNKNKDNHDDDDESDHSDDDHHDDDDNDKDSQGINDKGILTEEEMLEFQYHFNELSHYDGARNQFSPQFIQSLKKNKIVIDKVSCGKFHTLATPSKIQLIAPIESLQQYCIKYISENIINNMETDTSFPDINTLPINTVLKIDSHLTLNRNHSDRSQRLMSYLKSSFKQNINNNNNNNNSTTVNSPKSTKYEWDQYLENYSKEFEANAIVTLNNIEILTKTKGFEISLETINAIINGFIEFSQYIEQTSTQVANSENENENEIEMKMKMKKNEMKMKMKMK.

RCC1 repeat units follow at residues 1–48 (MYCW…VKGE) and 69–120 (KNRC…ITDQ). The interval 221-246 (YNNNNNNNNNNNNNNNNNNNNNNNNN) is disordered. A compositionally biased stretch (low complexity) spans 222–246 (NNNNNNNNNNNNNNNNNNNNNNNNN). Residues 298 to 348 (QNQVYGWGENLNGQLGIEGIDYSTEPILIELPLVEIKHISSGAYHSAFVTN) form an RCC1 3 repeat. A compositionally biased stretch (basic and acidic residues) spans 412 to 431 (IKDKNENNETKHTNKNKDNH). Residues 412-458 (IKDKNENNETKHTNKNKDNHDDDDESDHSDDDHHDDDDNDKDSQGIN) are disordered. Residues 432–451 (DDDDESDHSDDDHHDDDDND) are compositionally biased toward acidic residues. Positions 668-698 (IEQTSTQVANSENENENEIEMKMKMKKNEMK) form a coiled coil.

This Dictyostelium discoideum (Social amoeba) protein is RCC1 domain-containing protein DDB_G0295713.